A 353-amino-acid chain; its full sequence is Putative protein SPATA31J1 (353 aa).

The chain crosses the membrane as a helical span at residues 34–54 (IPQIIHFVLFVVFSLVILIIL). Residues 122–271 (EGSSHHLPRQ…NPGWVSWSDS (150 aa)) are disordered. Low complexity predominate over residues 182–195 (SVESLGSPSSLSSS). The span at 211–221 (PPASTLSPNPT) shows a compositional bias: polar residues. The span at 222–237 (SSTESLGYLSSLSSSQ) shows a compositional bias: low complexity. A compositionally biased stretch (basic residues) spans 244–262 (PLKHPSHKPRGRSLPRRRN).

Belongs to the SPATA31 family.

Its subcellular location is the membrane. This chain is Putative protein SPATA31J1, found in Homo sapiens (Human).